Consider the following 298-residue polypeptide: ATP synthase gamma chain (298 aa).

This sequence belongs to the ATPase gamma chain family. F-type ATPases have 2 components, CF(1) - the catalytic core - and CF(0) - the membrane proton channel. CF(1) has five subunits: alpha(3), beta(3), gamma(1), delta(1), epsilon(1). CF(0) has three main subunits: a, b and c.

The protein localises to the cell inner membrane. Its function is as follows. Produces ATP from ADP in the presence of a proton gradient across the membrane. The gamma chain is believed to be important in regulating ATPase activity and the flow of protons through the CF(0) complex. The polypeptide is ATP synthase gamma chain (Francisella tularensis subsp. tularensis (strain FSC 198)).